We begin with the raw amino-acid sequence, 584 residues long: DNA ligase (584 aa).

Glu249 serves as a coordination point for ATP. The active-site N6-AMP-lysine intermediate is Lys251. 6 residues coordinate ATP: Arg256, Arg271, Glu301, Phe341, Arg416, and Lys422.

It belongs to the ATP-dependent DNA ligase family. Requires Mg(2+) as cofactor.

The enzyme catalyses ATP + (deoxyribonucleotide)n-3'-hydroxyl + 5'-phospho-(deoxyribonucleotide)m = (deoxyribonucleotide)n+m + AMP + diphosphate.. In terms of biological role, DNA ligase that seals nicks in double-stranded DNA during DNA replication, DNA recombination and DNA repair. In Pyrobaculum islandicum (strain DSM 4184 / JCM 9189 / GEO3), this protein is DNA ligase.